The primary structure comprises 257 residues: Isoprenyl transferase (257 aa).

Aspartate 37 is an active-site residue. Aspartate 37 is a Mg(2+) binding site. Substrate is bound by residues 38 to 41 (GNGR), tryptophan 42, arginine 50, histidine 54, and 82 to 84 (STE). Catalysis depends on asparagine 85, which acts as the Proton acceptor. Residues tryptophan 86, arginine 88, arginine 205, and 211–213 (RLS) each bind substrate. Glutamate 224 serves as a coordination point for Mg(2+).

This sequence belongs to the UPP synthase family. As to quaternary structure, homodimer. Requires Mg(2+) as cofactor.

Catalyzes the condensation of isopentenyl diphosphate (IPP) with allylic pyrophosphates generating different type of terpenoids. This chain is Isoprenyl transferase, found in Shouchella clausii (strain KSM-K16) (Alkalihalobacillus clausii).